The following is a 91-amino-acid chain: Alpha-defensin-related sequence 2 (91 aa).

An N-terminal signal peptide occupies residues 1–19 (MKKLVLLFALVLLAFQVQA). Positions 20–58 (DSIQNTDEETKTEEQPGEKDQAVSVSFGDPQGSALQDAA) are excised as a propeptide. The interval 22 to 48 (IQNTDEETKTEEQPGEKDQAVSVSFGD) is disordered. Over residues 27 to 40 (EETKTEEQPGEKDQ) the composition is skewed to basic and acidic residues. Repeat copies occupy residues 65–67 (CPQ), 68–70 (CPR), 71–73 (CPS), 74–76 (CPS), 77–79 (CPR), 80–82 (CPR), and 83–85 (CPR). Residues 65 to 85 (CPQCPRCPSCPSCPRCPRCPR) form a 7 X 3 AA tandem repeats of C-P-X region.

The protein belongs to the alpha-defensin family. In terms of tissue distribution, small bowel, spleen, colon, kidney, liver, stomach and femur marrow.

It localises to the secreted. Apparent precursor of a secreted, cationic, proline- and cysteine-rich peptide that contains Cys-Pro-Xaa repeats. Unlike cryptdin, the proposed mature peptide region lacks the structural motif characteristic of defensins. It may have microbicidal activities. The polypeptide is Alpha-defensin-related sequence 2 (Defa-rs2) (Mus musculus (Mouse)).